We begin with the raw amino-acid sequence, 269 residues long: Tryptophan synthase alpha chain (269 aa).

Active-site proton acceptor residues include E49 and D60.

Belongs to the TrpA family. In terms of assembly, tetramer of two alpha and two beta chains.

The enzyme catalyses (1S,2R)-1-C-(indol-3-yl)glycerol 3-phosphate + L-serine = D-glyceraldehyde 3-phosphate + L-tryptophan + H2O. The protein operates within amino-acid biosynthesis; L-tryptophan biosynthesis; L-tryptophan from chorismate: step 5/5. The alpha subunit is responsible for the aldol cleavage of indoleglycerol phosphate to indole and glyceraldehyde 3-phosphate. The chain is Tryptophan synthase alpha chain from Actinobacillus succinogenes (strain ATCC 55618 / DSM 22257 / CCUG 43843 / 130Z).